A 263-amino-acid chain; its full sequence is Oxygen-evolving enhancer protein 2-1, chloroplastic (263 aa).

At S153 the chain carries Phosphoserine.

The protein belongs to the PsbP family. Interacts with WAK1.

The protein resides in the plastid. It localises to the chloroplast thylakoid lumen. Its function is as follows. May be involved in the regulation of photosystem II. This Arabidopsis thaliana (Mouse-ear cress) protein is Oxygen-evolving enhancer protein 2-1, chloroplastic (PSBP1).